The primary structure comprises 279 residues: Pantothenate synthetase (279 aa).

30–37 (MGALHAGH) is an ATP binding site. H37 functions as the Proton donor in the catalytic mechanism. Q61 contacts (R)-pantoate. Residue Q61 participates in beta-alanine binding. 147 to 150 (GEKD) is a binding site for ATP. A (R)-pantoate-binding site is contributed by Q153. ATP is bound by residues A176 and 184 to 187 (LSSR).

This sequence belongs to the pantothenate synthetase family. As to quaternary structure, homodimer.

The protein resides in the cytoplasm. It carries out the reaction (R)-pantoate + beta-alanine + ATP = (R)-pantothenate + AMP + diphosphate + H(+). It functions in the pathway cofactor biosynthesis; (R)-pantothenate biosynthesis; (R)-pantothenate from (R)-pantoate and beta-alanine: step 1/1. Functionally, catalyzes the condensation of pantoate with beta-alanine in an ATP-dependent reaction via a pantoyl-adenylate intermediate. This is Pantothenate synthetase from Sphingopyxis alaskensis (strain DSM 13593 / LMG 18877 / RB2256) (Sphingomonas alaskensis).